The primary structure comprises 632 residues: MHFHERFDVIVIGGGHAGTEAALAAARMGSKTLLLTHNIDTLGQMSCNPAIGGIGKGHLVKEIDALGGAMAIATDYAGIQFRTLNSSKGPAVRATRAQADRALYRAKIQEILQNQPNLRLFQQAVDDLIVENGKVTGVVTQMGLAFEAPAVVLTAGTFLSGKIHIGMQNYSGGRAGDPPSIALADRLRELPIRIGRLKTGTPPRIDANTINFDLMTEQKGDTPLPVMSFIGDVSHHPRQVSCFVTHTNERTHDIIRGGLDRSPMYSGIIEGVGPRYCPSIEDKINRFADKSSHQIFIEPEGLNTNEIYPNGISTSLPFDVQLNLVRSIKGMENAEIIRPGYAIEYDYFDPRDLKNSLETKSIQGLFFAGQINGTTGYEEAGAQGLLAGMNASLQVQGKESWCPRRDEAYLGVLVDDLSTLGTKEPYRMFTSRAEYRLLLREDNADLRLTEKGHQIGLVDEDRWAKFNKKRESIELELQRLRSQWVHPNSPLLEVLNPELNTPISREASFEDLLRRPEMDYPKLMSLEGFGPALEDQRAAEQVQIQVKYSGYIQRQQDEIDKAIKHETTGLPLELDYQEVPGLSNEVIAKLNDHKPETIGQASRISGMTPAAISILLVHLKRRGLLRKNPSKS.

FAD contacts are provided by residues 13–18 (GGGHAG), Val125, and Ser180. Position 273–287 (273–287 (GPRYCPSIEDKINRF)) interacts with NAD(+). Gln370 contributes to the FAD binding site.

The protein belongs to the MnmG family. In terms of assembly, homodimer. Heterotetramer of two MnmE and two MnmG subunits. Requires FAD as cofactor.

The protein localises to the cytoplasm. NAD-binding protein involved in the addition of a carboxymethylaminomethyl (cmnm) group at the wobble position (U34) of certain tRNAs, forming tRNA-cmnm(5)s(2)U34. The protein is tRNA uridine 5-carboxymethylaminomethyl modification enzyme MnmG of Shewanella sediminis (strain HAW-EB3).